A 162-amino-acid chain; its full sequence is Regulator of sigma D (162 aa).

This sequence belongs to the Rsd/AlgQ family. Interacts with RpoD.

The protein resides in the cytoplasm. Functionally, binds RpoD and negatively regulates RpoD-mediated transcription activation by preventing the interaction between the primary sigma factor RpoD with the catalytic core of the RNA polymerase and with promoter DNA. May be involved in replacement of the RNA polymerase sigma subunit from RpoD to RpoS during the transition from exponential growth to the stationary phase. In Salmonella choleraesuis (strain SC-B67), this protein is Regulator of sigma D.